A 60-amino-acid chain; its full sequence is Large ribosomal subunit protein bL32 (60 aa).

The protein belongs to the bacterial ribosomal protein bL32 family.

The polypeptide is Large ribosomal subunit protein bL32 (Borrelia duttonii (strain Ly)).